The sequence spans 128 residues: MRFAIVVTGPAYGTQQASSAFQFAQALIAEGHELSCVFFYREGVYNANQLTSPASDEFDLVRGWQQLNAQHGVALNICVAAALRRGIVDETEAGRLGLASSNLQSGFTLSGLGALAEASLTCDRVVQF.

Cysteine 78 serves as the catalytic Cysteine persulfide intermediate.

This sequence belongs to the DsrE/TusD family. As to quaternary structure, heterohexamer, formed by a dimer of trimers. The hexameric TusBCD complex contains 2 copies each of TusB, TusC and TusD. The TusBCD complex interacts with TusE.

It is found in the cytoplasm. Part of a sulfur-relay system required for 2-thiolation of 5-methylaminomethyl-2-thiouridine (mnm(5)s(2)U) at tRNA wobble positions. Accepts sulfur from TusA and transfers it in turn to TusE. The polypeptide is Sulfurtransferase TusD (Escherichia coli O7:K1 (strain IAI39 / ExPEC)).